The primary structure comprises 106 residues: Integration host factor subunit beta (106 aa).

The segment at 57–106 is disordered; the sequence is PARAGRNPRTGEHVPVEQKSVPFFKTGKEMRERLNRDGLDGATPPSPPAA. Over residues 82-95 the composition is skewed to basic and acidic residues; sequence TGKEMRERLNRDGL.

The protein belongs to the bacterial histone-like protein family. In terms of assembly, heterodimer of an alpha and a beta chain.

This protein is one of the two subunits of integration host factor, a specific DNA-binding protein that functions in genetic recombination as well as in transcriptional and translational control. The sequence is that of Integration host factor subunit beta from Afipia carboxidovorans (strain ATCC 49405 / DSM 1227 / KCTC 32145 / OM5) (Oligotropha carboxidovorans).